The primary structure comprises 372 residues: 4-hydroxy-3-methylbut-2-en-1-yl diphosphate synthase (flavodoxin) (372 aa).

C270, C273, C305, and E312 together coordinate [4Fe-4S] cluster.

Belongs to the IspG family. [4Fe-4S] cluster is required as a cofactor.

The catalysed reaction is (2E)-4-hydroxy-3-methylbut-2-enyl diphosphate + oxidized [flavodoxin] + H2O + 2 H(+) = 2-C-methyl-D-erythritol 2,4-cyclic diphosphate + reduced [flavodoxin]. It functions in the pathway isoprenoid biosynthesis; isopentenyl diphosphate biosynthesis via DXP pathway; isopentenyl diphosphate from 1-deoxy-D-xylulose 5-phosphate: step 5/6. Functionally, converts 2C-methyl-D-erythritol 2,4-cyclodiphosphate (ME-2,4cPP) into 1-hydroxy-2-methyl-2-(E)-butenyl 4-diphosphate. The protein is 4-hydroxy-3-methylbut-2-en-1-yl diphosphate synthase (flavodoxin) of Cronobacter sakazakii (strain ATCC BAA-894) (Enterobacter sakazakii).